The following is a 96-amino-acid chain: Large ribosomal subunit protein bL28 (96 aa).

The tract at residues 1-21 (MSRVCELTGKGPMTGNNVSHA) is disordered.

The protein belongs to the bacterial ribosomal protein bL28 family.

In Jannaschia sp. (strain CCS1), this protein is Large ribosomal subunit protein bL28.